The chain runs to 368 residues: Agmatine deiminase (368 aa).

The Amidino-cysteine intermediate role is filled by Cys-357.

The protein belongs to the agmatine deiminase family. In terms of assembly, homodimer.

The catalysed reaction is agmatine + H2O = N-carbamoylputrescine + NH4(+). It functions in the pathway amine and polyamine biosynthesis; putrescine biosynthesis via agmatine pathway; N-carbamoylputrescine from agmatine: step 1/1. Functionally, mediates the hydrolysis of agmatine into N-carbamoylputrescine in the arginine decarboxylase (ADC) pathway of putrescine biosynthesis, a basic polyamine. This Pseudomonas syringae pv. tomato (strain ATCC BAA-871 / DC3000) protein is Agmatine deiminase.